A 423-amino-acid chain; its full sequence is Mannose-6-phosphate isomerase (423 aa).

Ala2 is modified (N-acetylalanine). Ser102 and Ser108 each carry phosphoserine. 4 residues coordinate Zn(2+): Gln110, His112, Glu137, and His276. Arg295 is an active-site residue.

This sequence belongs to the mannose-6-phosphate isomerase type 1 family. Zn(2+) serves as cofactor.

Its subcellular location is the cytoplasm. The enzyme catalyses D-mannose 6-phosphate = D-fructose 6-phosphate. It functions in the pathway nucleotide-sugar biosynthesis; GDP-alpha-D-mannose biosynthesis; alpha-D-mannose 1-phosphate from D-fructose 6-phosphate: step 1/2. Functionally, isomerase that catalyzes the interconversion of fructose-6-P and mannose-6-P and has a critical role in the supply of D-mannose derivatives required for many eukaryotic glycosylation reactions. The chain is Mannose-6-phosphate isomerase (MPI) from Bos taurus (Bovine).